We begin with the raw amino-acid sequence, 90 residues long: Probable Fe(2+)-trafficking protein (90 aa).

Belongs to the Fe(2+)-trafficking protein family.

Its function is as follows. Could be a mediator in iron transactions between iron acquisition and iron-requiring processes, such as synthesis and/or repair of Fe-S clusters in biosynthetic enzymes. The polypeptide is Probable Fe(2+)-trafficking protein (Coxiella burnetii (strain CbuG_Q212) (Coxiella burnetii (strain Q212))).